Here is a 1039-residue protein sequence, read N- to C-terminus: MLKTEKILHLKARGRSVRAVREHYLREDVRCGSALCLTCPRDGKLLSEDLTHYVVPDCQILQDYLEVLEFPELRGIIIMQTACQSVQHQRGRRQYKRLCSLLRDTRHDCILFSNEFQNHAYLPREMGESALAWQTRCIYNSCVWYYQHCQKKIPVVMVTEDKSVIRQYNTETQEVYVVSFQIYLETFWPNLKGALELYKSLKETHRERELESREGNGKEYPEHLPLEILEAGIKSGRYQQGVLSVNKHRAQLEGFVRLQGLGGKETDIQSDILIYGTKPRNRAIHGDLVAVELLSRSEWKGRNGALCENETDEKAVDAQAEVMPTGRVVGILQRNWRDYVATFPAKEDIETQGKNAQRVLVMPWDYRIPKIRISTQQAEALQDYRVVVRIDSWESTSLYPNGHFVRVLGRTGNLEAEIATILVENSISVNPFSEAQLAEMPSNTPESPWQVKPEEGDRLDLRKTHLVFSIDPKGCEDVDDALSIRKLPSGHLELGVHIADVTHFVPPNTYTDIEARSRATTYYLADRRYDMLPLILSADLCSLLGGVDRYAVSVIWEMDSSTYEIRRVWYGRTIIRSSYKLSYEVAQQLMDGDLEPLNTEMELHPLKQDPVRLEQLLWAVGKLTEVAHATRMRRDMSGALELEGVEVRVQLGEKHSIDDLVPKQPLQMHETIAECMILANHWVAKKIWECYPQHALLRLHPPARQEFFQELKECAKARGFSIDTRSNKALADSLDQANDPSDPLVNQLLRMMATQAMSNARYFSTGSYTEDEFYHYGLALEKYTHFTSPIRRYADIVVHRLLLAAVNKGPKDNLLGNKDLEELCRHINVRNRAAQHCQKQSTELFQCMFFKDKDPDSDQRCISDAVIYGIRTNGVLLFLPRYGIKGAAYLKNIDGLVLACKDNGRCHWMPGSLQRLPDRIVVTTQEAKSFSYCLFDHVTVRIHVQSSRFHPDSIRLEIIRNRPHSSQEALPSASNPQLARSELVKEVTRTAVEAQLAVEGAEELKPVEHYQEYRQTQGQSLYSMLEELWDLALLDVSGA.

A CSD1 domain is found at 221-309; the sequence is PEHLPLEILE…KGRNGALCEN (89 aa). Residues 359 to 425 form the CSD2 domain; the sequence is VLVMPWDYRI…AEIATILVEN (67 aa). The region spanning 458–807 is the RNB domain; the sequence is RLDLRKTHLV…VHRLLLAAVN (350 aa).

It belongs to the RNR ribonuclease family. Component of the RNA exosome complex. Mg(2+) is required as a cofactor.

The protein localises to the cytoplasm. It catalyses the reaction Exonucleolytic cleavage in the 3'- to 5'-direction to yield nucleoside 5'-phosphates.. In terms of biological role, catalytic component of the RNA exosome complex which has 3'-&gt;5' exoribonuclease activity and participates in a multitude of cellular RNA processing and degradation events. The polypeptide is DIS3-like exonuclease 1 (dis3l) (Xenopus tropicalis (Western clawed frog)).